The primary structure comprises 626 residues: ATP-dependent zinc metalloprotease FtsH (626 aa).

Residues 1–7 lie on the Cytoplasmic side of the membrane; that stretch reads MNGNRPN. Residues 8–28 traverse the membrane as a helical segment; sequence YISLIFAALVILSLFWLVRSF. The Periplasmic segment spans residues 29–108; it reads YFDTSAPSKM…VTGEKGVSSS (80 aa). The chain crosses the membrane as a helical span at residues 109–129; sequence FWVNVIGNVIFIGFLLFMFFF. The Cytoplasmic portion of the chain corresponds to 130 to 626; it reads MMRTISGRNN…RAAAGSEQDS (497 aa). 202 to 209 lines the ATP pocket; the sequence is GPPGTGKT. A Zn(2+)-binding site is contributed by His424. Glu425 is a catalytic residue. Zn(2+)-binding residues include His428 and Asp501.

It in the central section; belongs to the AAA ATPase family. This sequence in the C-terminal section; belongs to the peptidase M41 family. In terms of assembly, homohexamer. Zn(2+) is required as a cofactor.

Its subcellular location is the cell inner membrane. In terms of biological role, acts as a processive, ATP-dependent zinc metallopeptidase for both cytoplasmic and membrane proteins. Plays a role in the quality control of integral membrane proteins. The sequence is that of ATP-dependent zinc metalloprotease FtsH from Pseudothermotoga lettingae (strain ATCC BAA-301 / DSM 14385 / NBRC 107922 / TMO) (Thermotoga lettingae).